A 116-amino-acid polypeptide reads, in one-letter code: FK506-binding protein 1 (116 aa).

Residues 19 to 116 (GDKVSIHYTG…IFEVELLKIN (98 aa)) enclose the PPIase FKBP-type domain.

It belongs to the FKBP-type PPIase family. FKBP1 subfamily.

The protein resides in the cytoplasm. The catalysed reaction is [protein]-peptidylproline (omega=180) = [protein]-peptidylproline (omega=0). With respect to regulation, inhibited by both FK506 and rapamycin. PPIases accelerate the folding of proteins. It catalyzes the cis-trans isomerization of proline imidic peptide bonds in oligopeptides. The sequence is that of FK506-binding protein 1 (fpr1) from Aspergillus oryzae (strain ATCC 42149 / RIB 40) (Yellow koji mold).